The sequence spans 127 residues: Major sperm protein isoform beta (127 aa).

Ala-2 bears the N-acetylalanine mark. The region spanning 9 to 126 (DINTQPGSKI…RRKNLPIEYN (118 aa)) is the MSP domain.

As to quaternary structure, forms filaments 10 nm wide, with a characteristic substructure repeating axially at 9 nm. In terms of tissue distribution, sperm.

It localises to the cell projection. Its subcellular location is the pseudopodium. It is found in the cytoplasm. The protein resides in the cytoskeleton. In terms of biological role, central component in molecular interactions underlying sperm crawling. Forms an extensive filament system that extends from sperm villipoda, along the leading edge of the pseudopod. This chain is Major sperm protein isoform beta, found in Ascaris suum (Pig roundworm).